The following is a 469-amino-acid chain: Glutamate--tRNA ligase (469 aa).

The 'HIGH' region signature appears at 9–19; the sequence is PSPTGFLHVGG. The Zn(2+) site is built by Cys98, Cys100, Cys125, and Asp127. The 'KMSKS' region motif lies at 236–240; that stretch reads KLSKR. Residue Lys239 coordinates ATP.

Belongs to the class-I aminoacyl-tRNA synthetase family. Glutamate--tRNA ligase type 1 subfamily. Monomer. It depends on Zn(2+) as a cofactor.

It is found in the cytoplasm. It catalyses the reaction tRNA(Glu) + L-glutamate + ATP = L-glutamyl-tRNA(Glu) + AMP + diphosphate. Functionally, catalyzes the attachment of glutamate to tRNA(Glu) in a two-step reaction: glutamate is first activated by ATP to form Glu-AMP and then transferred to the acceptor end of tRNA(Glu). The sequence is that of Glutamate--tRNA ligase from Shewanella halifaxensis (strain HAW-EB4).